The following is a 436-amino-acid chain: Voltage-gated purine nucleotide uniporter SLC17A9 (436 aa).

10 helical membrane-spanning segments follow: residues 64–84, 92–112, 118–138, 158–178, 181–201, 239–259, 276–296, 316–336, 369–389, and 402–422; these read IVLSSFFWGYCLTQVVGGHLG, VILLSASAWGSITAVTPLLAH, LAFMTFSRILMGLLQGVYFPA, IVGAGSQFGTLLTGAVGSLLL, YGWQSIFYFSGGLTLLWVWYV, PAVWAAVVSQLSAACSFFILL, WIFNVVPWLVAIPASLFSGFL, GMGLGLSSVFALCLGHTSSFC, GFLFGVANTAGALAGVVGVCL, and CLFNLVAIISNLGLCTFLVFG.

This sequence belongs to the major facilitator superfamily. Sodium/anion cotransporter family. Widely expressed, but more predominantly in adrenal gland, brain and thyroid.

It is found in the cytoplasmic vesicle. The protein resides in the secretory vesicle. It localises to the chromaffin granule membrane. Its subcellular location is the secretory vesicle membrane. The protein localises to the lysosome membrane. The catalysed reaction is ATP(in) = ATP(out). The enzyme catalyses ADP(in) = ADP(out). It carries out the reaction GTP(in) = GTP(out). With respect to regulation, activity is chloride-dependent. Inhibited by AMP-PNP, gammaS-ATP, diadenosine triphosphate, 4,4'- diisothiocyanatostilbene-2,2'-disulfonate (DIDS) and Evans blue. Functionally, voltage-gated ATP nucleotide uniporter that can also transport the purine nucleotides ADP and GTP. Uses the membrane potential as the driving force to control ATP accumulation in lysosomes and secretory vesicles. By controlling ATP storage in lysosomes, regulates ATP-dependent proteins of these organelles. Also indirectly regulates the exocytosis of ATP through its import into lysosomes in astrocytes and secretory vesicles such as adrenal chromaffin granules, mucin granules and synaptic vesicles. The protein is Voltage-gated purine nucleotide uniporter SLC17A9 of Homo sapiens (Human).